A 142-amino-acid polypeptide reads, in one-letter code: Large ribosomal subunit protein uL11 (142 aa).

This sequence belongs to the universal ribosomal protein uL11 family. Part of the ribosomal stalk of the 50S ribosomal subunit. Interacts with L10 and the large rRNA to form the base of the stalk. L10 forms an elongated spine to which L12 dimers bind in a sequential fashion forming a multimeric L10(L12)X complex. In terms of processing, one or more lysine residues are methylated.

Functionally, forms part of the ribosomal stalk which helps the ribosome interact with GTP-bound translation factors. This is Large ribosomal subunit protein uL11 from Citrobacter koseri (strain ATCC BAA-895 / CDC 4225-83 / SGSC4696).